Here is a 742-residue protein sequence, read N- to C-terminus: Probable serine/threonine-protein kinase PkwA (742 aa).

Positions 16–266 (YRLVSRLGAG…TAELLAQLST (251 aa)) constitute a Protein kinase domain. ATP is bound by residues 22–30 (LGAGGMGQV) and lysine 44. Aspartate 138 (proton acceptor) is an active-site residue. Residues 266 to 394 (TDHTGDDWPP…PWSPPRVQPP (129 aa)) form a disordered region. A compositionally biased stretch (pro residues) spans 301 to 318 (EPPPPSHGPPRPSEPLPD). A compositionally biased stretch (basic and acidic residues) spans 343–356 (LEEKPIQVIHEPER). The span at 377–392 (PRPAAPQPPWSPPRVQ) shows a compositional bias: pro residues. 7 WD repeats span residues 455–496 (ILTT…ELHT), 497–538 (LEGH…ERAV), 539–580 (FEGH…EHAV), 581–621 (LKGH…KERD), 622–663 (VLQA…ALHT), 664–705 (FEGH…EHTT), and 706–742 (LEGH…IATE).

It belongs to the protein kinase superfamily. Ser/Thr protein kinase family.

It carries out the reaction L-seryl-[protein] + ATP = O-phospho-L-seryl-[protein] + ADP + H(+). It catalyses the reaction L-threonyl-[protein] + ATP = O-phospho-L-threonyl-[protein] + ADP + H(+). Functionally, may play a regulatory role during the complex growth cycle and in secondary metabolite production. The protein is Probable serine/threonine-protein kinase PkwA (pkwA) of Thermomonospora curvata.